Here is a 417-residue protein sequence, read N- to C-terminus: Putative competence-damage inducible protein (417 aa).

This sequence belongs to the CinA family.

This Leuconostoc citreum (strain KM20) protein is Putative competence-damage inducible protein.